We begin with the raw amino-acid sequence, 238 residues long: Cysteine-rich venom protein 2 (238 aa).

The signal sequence occupies residues 1–19; that stretch reads MIAFIVLLSLAAVLQQSSG. The region spanning 38–164 is the SCP domain; it reads VDKHNALRRS…STKYLYVCQY (127 aa). 8 cysteine pairs are disulfide-bonded: C75–C153, C92–C165, C148–C162, C184–C191, C187–C196, C200–C233, C209–C227, and C218–C231. Residues 200–233 enclose the ShKT domain; it reads CEYEDAYTNCNDLVKERKCQTEWIKSQCPATCFC.

It belongs to the CRISP family. In terms of tissue distribution, expressed by the venom gland.

Its subcellular location is the secreted. Its function is as follows. Blocks contraction of smooth muscle elicited by high potassium-induced depolarization, but does not block caffeine-stimulated contraction. May target voltage-gated calcium channels (Cav) on smooth muscle. This is Cysteine-rich venom protein 2 from Hydrophis hardwickii (Hardwick's spine-bellied seasnake).